The chain runs to 153 residues: Putative nuclear shuttle protein (153 aa).

It belongs to the nanoviridae nuclear shuttle protein family.

The protein resides in the host nucleus. It is found in the host cytoplasm. In terms of biological role, putative nuclear shuttle protein. This is Putative nuclear shuttle protein (DNA-N) from Cicer arietinum (Chickpea).